The sequence spans 5061 residues: E3 ubiquitin-protein ligase rnf213-beta (5061 aa).

Over residues 1–12 the composition is skewed to basic residues; sequence MTRKRKSGKKGK. Positions 1-334 are disordered; it reads MTRKRKSGKK…QRKPSPVRAP (334 aa). 2 stretches are compositionally biased toward polar residues: residues 24–52 and 75–87; these read GGST…TQKD and SDGS…TNKE. A compositionally biased stretch (basic residues) spans 100–110; sequence LQKKGPQKRKG. 2 stretches are compositionally biased toward polar residues: residues 127–163 and 172–200; these read QTSY…TSAS and TETV…QPPQ. 2 stretches are compositionally biased toward basic and acidic residues: residues 217–229 and 236–289; these read KGSE…EESV and LSEI…EEPK. A compositionally biased stretch (low complexity) spans 292-301; sequence AAAAATGKTG. Residues 306–322 are compositionally biased toward polar residues; the sequence is EQTNQIEANQDSTMESK. ATP-binding positions include 1923–1928, Glu-2023, Asp-2074, Lys-2417, and Ser-2492; that span reads AVGKSL. Cys-3957, Cys-3960, Cys-3972, His-3974, Cys-3977, Cys-3980, Cys-3993, Cys-3996, Cys-4451, and His-4455 together coordinate Zn(2+). An RING-type zinc finger spans residues 3957–3997; it reads CRVCLMELSEPFALPCEHVFCRSCLRRSMEREEAQHCPVCR. The segment at 4429 to 4501 adopts an RZ-type zinc-finger fold; the sequence is MPDDHTSEAK…AYGDYDRTRP (73 aa). The active-site Nucleophile; for E3 ubiquitin-lipopolysaccharide ligase activity is Cys-4462. Residues Cys-4471 and Cys-4474 each coordinate Zn(2+).

This sequence belongs to the AAA ATPase family.

Its subcellular location is the cytoplasm. The protein resides in the cytosol. It is found in the lipid droplet. The catalysed reaction is S-ubiquitinyl-[E2 ubiquitin-conjugating enzyme]-L-cysteine + [acceptor protein]-L-lysine = [E2 ubiquitin-conjugating enzyme]-L-cysteine + N(6)-ubiquitinyl-[acceptor protein]-L-lysine.. It carries out the reaction ATP + H2O = ADP + phosphate + H(+). Its pathway is protein modification; protein ubiquitination. Functionally, atypical E3 ubiquitin ligase that can catalyze ubiquitination of both proteins and lipids, and which is involved in various processes, such as lipid metabolism, angiogenesis and cell-autonomous immunity. Acts as a key immune sensor by catalyzing ubiquitination of the lipid A moiety of bacterial lipopolysaccharide (LPS) via its RZ-type zinc-finger: restricts the proliferation of cytosolic bacteria, such as Salmonella, by generating the bacterial ubiquitin coat through the ubiquitination of LPS. Ubiquitination of LPS triggers cell-autonomous immunity, such as antibacterial autophagy, leading to degradation of the microbial invader. Involved in lipid metabolism by regulating fat storage and lipid droplet formation; act by inhibiting the lipolytic process. Also regulates lipotoxicity by inhibiting desaturation of fatty acids. Also acts as an E3 ubiquitin-protein ligase via its RING-type zinc finger. Involved in the non-canonical Wnt signaling pathway in vascular development: acts by mediating ubiquitination and degradation of proteins downstream of rspo3, leading to inhibit the non-canonical Wnt signaling pathway and promoting vessel regression. Also has ATPase activity; ATPase activity is required for ubiquitination of LPS. The polypeptide is E3 ubiquitin-protein ligase rnf213-beta (rnf213b) (Danio rerio (Zebrafish)).